Here is a 368-residue protein sequence, read N- to C-terminus: Dihydroorotate dehydrogenase (quinone) (368 aa).

FMN-binding positions include 67–71 (AGFDK) and Thr-91. Position 71 (Lys-71) interacts with substrate. 116 to 120 (NRMGF) lines the substrate pocket. Residues Asn-146 and Asn-179 each contribute to the FMN site. Asn-179 lines the substrate pocket. The active-site Nucleophile is the Ser-182. Asn-184 is a binding site for substrate. Lys-222 and Thr-250 together coordinate FMN. 251–252 (NT) serves as a coordination point for substrate. FMN-binding positions include Gly-276, Gly-305, and 326–327 (YS).

Belongs to the dihydroorotate dehydrogenase family. Type 2 subfamily. As to quaternary structure, monomer. FMN serves as cofactor.

The protein localises to the cell membrane. The enzyme catalyses (S)-dihydroorotate + a quinone = orotate + a quinol. The protein operates within pyrimidine metabolism; UMP biosynthesis via de novo pathway; orotate from (S)-dihydroorotate (quinone route): step 1/1. Its function is as follows. Catalyzes the conversion of dihydroorotate to orotate with quinone as electron acceptor. The chain is Dihydroorotate dehydrogenase (quinone) from Streptomyces coelicolor (strain ATCC BAA-471 / A3(2) / M145).